A 121-amino-acid polypeptide reads, in one-letter code: Large ribosomal subunit protein uL18 (121 aa).

It belongs to the universal ribosomal protein uL18 family. As to quaternary structure, part of the 50S ribosomal subunit; part of the 5S rRNA/L5/L18/L25 subcomplex. Contacts the 5S and 23S rRNAs.

In terms of biological role, this is one of the proteins that bind and probably mediate the attachment of the 5S RNA into the large ribosomal subunit, where it forms part of the central protuberance. The chain is Large ribosomal subunit protein uL18 from Roseiflexus castenholzii (strain DSM 13941 / HLO8).